A 62-amino-acid polypeptide reads, in one-letter code: Sucrase-isomaltase, intestinal (62 aa).

Topologically, residues 2 to 12 (ARKKFSGLEIX) are cytoplasmic. Ser-7 carries the phosphoserine; by PKA modification. The chain crosses the membrane as a helical; Signal-anchor for type II membrane protein span at residues 13–32 (LIVLFAIVLSIAIALVVVXA). Residues 33-38 (SKXPAV) lie on the Lumenal side of the membrane. A Sulfotyrosine modification is found at Tyr-59.

Belongs to the glycosyl hydrolase 31 family. In terms of assembly, the resulting sucrase and isomaltase subunits stay associated with one another in a complex by non-covalent linkages. Post-translationally, the precursor is proteolytically cleaved when exposed to pancreatic proteases in the intestinal lumen. In terms of processing, sulfated.

The protein resides in the apical cell membrane. The enzyme catalyses Hydrolysis of sucrose and maltose by an alpha-D-glucosidase-type action.. The catalysed reaction is Hydrolysis of (1-&gt;6)-alpha-D-glucosidic linkages in some oligosaccharides produced from starch and glycogen by alpha-amylase, and in isomaltose.. Its function is as follows. Plays an important role in the final stage of carbohydrate digestion. Isomaltase activity is specific for both alpha-1,4- and alpha-1,6-oligosaccharides. This is Sucrase-isomaltase, intestinal (SI) from Sus scrofa (Pig).